The following is a 261-amino-acid chain: uncharacterized protein (261 aa).

This is an uncharacterized protein from Saccharomyces cerevisiae (strain ATCC 204508 / S288c) (Baker's yeast).